Here is a 424-residue protein sequence, read N- to C-terminus: Phosphoprotein associated with glycosphingolipid-enriched microdomains 1 (424 aa).

Over 1–17 (MGPAGSALSSGQMQMQM) the chain is Extracellular. The chain crosses the membrane as a helical; Signal-anchor for type III membrane protein span at residues 18-38 (VLWGSLAAVAMFFLITFLILL). S-palmitoyl cysteine attachment occurs at residues Cys39 and Cys42. Residues 39–424 (CSSCDRDKKP…LQQGRDVTRL (386 aa)) lie on the Cytoplasmic side of the membrane. Phosphoserine is present on residues Ser52 and Ser63. Phosphotyrosine; by LYN is present on Tyr107. Position 157 is a phosphoserine (Ser157). Tyr165, Tyr183, and Tyr224 each carry phosphotyrosine. A disordered region spans residues 194 to 347 (DKSQGGKSKS…GPPQRSSSSC (154 aa)). Over residues 215-230 (AEGKADFAEYASVDRN) the composition is skewed to basic and acidic residues. The residue at position 226 (Ser226) is a Phosphoserine. Polar residues predominate over residues 236-247 (STNAESILGTSS). Tyr314 carries the post-translational modification Phosphotyrosine; by FYN and LYN. Positions 314-317 (YSSV) are interaction with CSK. The segment covering 331-347 (STCQCPQGPPQRSSSSC) has biased composition (polar residues). Residue Ser346 is modified to Phosphoserine. A phosphotyrosine mark is found at Tyr351, Tyr381, and Tyr409. Residues 361–424 (PNSISMLPPA…LQQGRDVTRL (64 aa)) are disordered. The segment at 422 to 424 (TRL) is interaction with NHERF1.

In terms of assembly, interacts with NHERF1/EBP50. In resting T-cells, part of a PAG1-NHERF1-MSN complex which is disrupted upon TCR activation. When phosphorylated, interacts with CSK. Identified in a complex with LYN and STAT3. Interacts with LYN. In terms of processing, palmitoylated. Post-translationally, phosphorylated by FYN on Tyr-314 in resting T-cells; which promotes interaction with CSK. Dephosphorylated by PTPRC/CD45 upon TCR activation; which leads to CSK dissociation. May also be dephosphorylated by PTPN11. Hyperphosphorylated in mast cells upon FCER1 activation. Phosphorylated by LYN in response to EPO. In terms of tissue distribution, ubiquitously expressed, with highest levels in developing brain, lung, thymus, spleen and testis. Present in mast cells.

Its subcellular location is the cell membrane. Functionally, negatively regulates TCR (T-cell antigen receptor)-mediated signaling in T-cells and FCER1 (high affinity immunoglobulin epsilon receptor)-mediated signaling in mast cells. Promotes CSK activation and recruitment to lipid rafts, which results in LCK inhibition. Inhibits immunological synapse formation by preventing dynamic arrangement of lipid raft proteins. May be involved in cell adhesion signaling. The chain is Phosphoprotein associated with glycosphingolipid-enriched microdomains 1 (Pag1) from Rattus norvegicus (Rat).